Here is a 163-residue protein sequence, read N- to C-terminus: Small ribosomal subunit protein uS9 (163 aa).

Residues 1-25 are compositionally biased toward low complexity; it reads MAENTNNSAVTETEETTAAFTTETN. A disordered region spans residues 1 to 40; the sequence is MAENTNNSAVTETEETTAAFTTETNSGAGTGTSTIAPGYG.

This sequence belongs to the universal ribosomal protein uS9 family.

This chain is Small ribosomal subunit protein uS9, found in Bifidobacterium animalis subsp. lactis (strain AD011).